The primary structure comprises 225 residues: MNARPLSELVDDGWAAALAPVESQVAQMGEFLRAELAAGHRYLPAGPNILRAFTFPLEKVRVLIVGQDPYPTPGHAVGLSFSVAPDVRPLPRSLDNIFKEYRADLGHPAPSNGDLTPWCEQGVMLLNRVLTVRPGTPASHRGKGWEAVTECAIRALVARRQPMVAVLWGRDASTLKPMLEDTAVIESPHPSPLSASRGFFGSKPFSRANELLAQRGAEPVDWRLP.

Asp-68 serves as the catalytic Proton acceptor.

It belongs to the uracil-DNA glycosylase (UDG) superfamily. UNG family.

The protein localises to the cytoplasm. It carries out the reaction Hydrolyzes single-stranded DNA or mismatched double-stranded DNA and polynucleotides, releasing free uracil.. Its function is as follows. Excises uracil residues from the DNA which can arise as a result of misincorporation of dUMP residues by DNA polymerase or due to deamination of cytosine. In Mycolicibacterium gilvum (strain PYR-GCK) (Mycobacterium gilvum (strain PYR-GCK)), this protein is Uracil-DNA glycosylase.